A 105-amino-acid polypeptide reads, in one-letter code: uncharacterized protein (105 aa).

Residues 47–105 form a disordered region; that stretch reads ENASAPRIQPSVTPSPAAPPSTDQLMMEKMMGSAGLNKYRKQEKEKQEEDGNGESLFDF. The span at 86-95 shows a compositional bias: basic and acidic residues; it reads RKQEKEKQEE.

This is an uncharacterized protein from Bacillus subtilis (strain 168).